We begin with the raw amino-acid sequence, 73 residues long: UPF0499 protein CHGG_06021 (73 aa).

Positions 1–20 are cleaved as a signal peptide; the sequence is MKSSIHVVLFFLLSLVASMA. Disulfide bonds link Cys-41-Cys-55, Cys-48-Cys-60, and Cys-54-Cys-69.

The protein belongs to the UPF0499 family.

Its subcellular location is the secreted. This is UPF0499 protein CHGG_06021 from Chaetomium globosum (strain ATCC 6205 / CBS 148.51 / DSM 1962 / NBRC 6347 / NRRL 1970) (Soil fungus).